Here is a 633-residue protein sequence, read N- to C-terminus: Polypeptide N-acetylgalactosaminyltransferase 3 (633 aa).

At M1 to K19 the chain is on the cytoplasmic side. A helical; Signal-anchor for type II membrane protein transmembrane segment spans residues F20–M37. Over Q38–D633 the chain is Lumenal. N132 carries N-linked (GlcNAc...) asparagine glycosylation. The catalytic subdomain A stretch occupies residues L184–R293. D277 and H279 together coordinate Mn(2+). An N-linked (GlcNAc...) asparagine glycan is attached at N297. The segment at P356–R418 is catalytic subdomain B. Residue H415 participates in Mn(2+) binding. N484 is a glycosylation site (N-linked (GlcNAc...) asparagine). A Ricin B-type lectin domain is found at V504 to S630. Cysteines 517 and 535 form a disulfide. UDP-N-acetyl-alpha-D-galactosamine contacts are provided by D519, E522, H536, and N541. 2 cysteine pairs are disulfide-bonded: C561–C574 and C605–C618.

It belongs to the glycosyltransferase 2 family. GalNAc-T subfamily. Requires Mn(2+) as cofactor. As to expression, expressed in organs that contain secretory epithelial glands. Highly expressed in pancreas, skin, kidney and testis. Weakly expressed in prostate, ovary, intestine and colon. Also expressed in placenta and lung and fetal lung and fetal kidney.

Its subcellular location is the golgi apparatus. The protein localises to the golgi stack membrane. The catalysed reaction is L-seryl-[protein] + UDP-N-acetyl-alpha-D-galactosamine = a 3-O-[N-acetyl-alpha-D-galactosaminyl]-L-seryl-[protein] + UDP + H(+). It carries out the reaction L-threonyl-[protein] + UDP-N-acetyl-alpha-D-galactosamine = a 3-O-[N-acetyl-alpha-D-galactosaminyl]-L-threonyl-[protein] + UDP + H(+). Its pathway is protein modification; protein glycosylation. Catalyzes the initial reaction in O-linked oligosaccharide biosynthesis, the transfer of an N-acetyl-D-galactosamine residue to a serine or threonine residue on the protein receptor. Has activity toward HIV envelope glycoprotein gp120, EA2, MUC2, MUC1A and MUC5AC. Probably glycosylates fibronectin in vivo. Glycosylates FGF23. This chain is Polypeptide N-acetylgalactosaminyltransferase 3 (GALNT3), found in Homo sapiens (Human).